A 75-amino-acid polypeptide reads, in one-letter code: Cytochrome c oxidase subunit 6C (75 aa).

Topologically, residues 1–13 are mitochondrial matrix; it reads MASEVLAKPQMRG. A helical membrane pass occupies residues 14 to 54; it reads LLARRLRIHMVGAFLISLGVAALYKFGVAEPRKKAYADFYK. The Mitochondrial intermembrane portion of the chain corresponds to 55-75; the sequence is NYSPEKDFEEMKKAGVFRSIK.

Belongs to the cytochrome c oxidase subunit 6c family. Component of the cytochrome c oxidase (complex IV, CIV), a multisubunit enzyme composed of 14 subunits. The complex is composed of a catalytic core of 3 subunits MT-CO1, MT-CO2 and MT-CO3, encoded in the mitochondrial DNA, and 11 supernumerary subunits COX4I, COX5A, COX5B, COX6A, COX6B, COX6C, COX7A, COX7B, COX7C, COX8 and NDUFA4, which are encoded in the nuclear genome. The complex exists as a monomer or a dimer and forms supercomplexes (SCs) in the inner mitochondrial membrane with NADH-ubiquinone oxidoreductase (complex I, CI) and ubiquinol-cytochrome c oxidoreductase (cytochrome b-c1 complex, complex III, CIII), resulting in different assemblies (supercomplex SCI(1)III(2)IV(1) and megacomplex MCI(2)III(2)IV(2)).

It is found in the mitochondrion inner membrane. It participates in energy metabolism; oxidative phosphorylation. In terms of biological role, component of the cytochrome c oxidase, the last enzyme in the mitochondrial electron transport chain which drives oxidative phosphorylation. The respiratory chain contains 3 multisubunit complexes succinate dehydrogenase (complex II, CII), ubiquinol-cytochrome c oxidoreductase (cytochrome b-c1 complex, complex III, CIII) and cytochrome c oxidase (complex IV, CIV), that cooperate to transfer electrons derived from NADH and succinate to molecular oxygen, creating an electrochemical gradient over the inner membrane that drives transmembrane transport and the ATP synthase. Cytochrome c oxidase is the component of the respiratory chain that catalyzes the reduction of oxygen to water. Electrons originating from reduced cytochrome c in the intermembrane space (IMS) are transferred via the dinuclear copper A center (CU(A)) of subunit 2 and heme A of subunit 1 to the active site in subunit 1, a binuclear center (BNC) formed by heme A3 and copper B (CU(B)). The BNC reduces molecular oxygen to 2 water molecules using 4 electrons from cytochrome c in the IMS and 4 protons from the mitochondrial matrix. This Saimiri sciureus (Common squirrel monkey) protein is Cytochrome c oxidase subunit 6C (COX6C).